Reading from the N-terminus, the 1717-residue chain is PH domain leucine-rich repeat-containing protein phosphatase 1 (1717 aa).

Position 1 is an N-acetylmethionine (methionine 1). 4 disordered regions span residues 1 to 25 (MEPA…SAPA), 41 to 118 (LAAA…GANS), 136 to 156 (AASS…GAAG), and 252 to 470 (PGAA…PPPT). Residues 98–110 (APQPIAGGAAPVP) are compositionally biased toward low complexity. The span at 262–274 (EPPPEAGPRLAPP) shows a compositional bias: pro residues. Low complexity-rich tracts occupy residues 313–325 (SRRA…DSSP) and 333–345 (PVSS…PVVS). The residue at position 317 (serine 317) is a Phosphoserine. Composition is skewed to polar residues over residues 346-358 (DTES…SAES) and 408-417 (QTASSPQPQQ). Serine 412 is subject to Phosphoserine. The region spanning 536-636 (RIQLSGMYNV…WLRQVSKVAS (101 aa)) is the PH domain. 21 LRR repeats span residues 638 to 659 (RISS…LFYS), 661 to 682 (DLTH…PAAR), 692 to 712 (KLKS…AVCS), 715 to 736 (TLAE…VGVM), 738 to 760 (NLQT…ENMK), 761 to 783 (QLSY…EKLT), 784 to 804 (AVDK…QALR), 808 to 831 (HIKH…DFLQ), 832 to 853 (HVTQ…IFNN), 873 to 894 (FLKA…PVPN), 895 to 916 (YLSY…VCES), 918 to 939 (KLEV…LFCN), 941 to 962 (SLRK…LERT), 963 to 984 (SVEV…LLMK), 987 to 1008 (SLRF…TLSE), 1013 to 1033 (ILQE…PLLT), 1037 to 1058 (HLKI…KMAK), 1061 to 1082 (ELEE…IMNC), 1084 to 1105 (RMHT…MQLP), 1106 to 1127 (EIKC…ENLP), and 1129 to 1150 (KLQE…TLEL). Residues 1076 to 1205 (PTTIMNCRRM…NNFCDNREAL (130 aa)) form an interaction with NHERF1 region. Residues 1175–1422 (SHGYTEASGV…DSISAVVVQL (248 aa)) form the PPM-type phosphatase domain. 4 residues coordinate Mn(2+): aspartate 1210, glycine 1211, lysine 1374, and aspartate 1413. Disordered regions lie at residues 1458–1510 (DRPS…SPAY) and 1673–1717 (EVKE…DTPL). The span at 1468-1489 (SSSSGMASEISSELSTSEMSSE) shows a compositional bias: low complexity. The short motif at 1715 to 1717 (TPL) is the PDZ-binding; required for interaction with NHERF1 element.

As to quaternary structure, interacts with the nucleotide free form of K-Ras (KRAS) via its LRR repeats. Interacts with AKT2, AKT3, PRKCB isoform beta-II, STK4, RPS6KB1, RAF1. Isoform 1 (predominantly) and isoform 2 interact with BRAP. Interacts with FKBP5; FKBP5 acts as a scaffold for PHLPP1 and Akt. Interacts with SCRIB; SCRIB acts as a scaffold for PHLPP1 and Akt. Interacts with NHERF1; NHERF1 scaffolds a heterotrimeric complex with PTEN at the plasma membrane. Interacts with WDR48 and USP12. It depends on Mn(2+) as a cofactor. In terms of tissue distribution, in colorectal cancer tissue, expression is highest in the surface epithelium of normal colonic mucosa adjacent to the cancer tissue but is largely excluded from the crypt bases. Expression is lost or significantly decreased in 78% of tested tumors (at protein level). Ubiquitously expressed in non-cancerous tissues.

The protein resides in the cytoplasm. Its subcellular location is the membrane. It localises to the nucleus. The protein localises to the cell membrane. The enzyme catalyses O-phospho-L-seryl-[protein] + H2O = L-seryl-[protein] + phosphate. It carries out the reaction O-phospho-L-threonyl-[protein] + H2O = L-threonyl-[protein] + phosphate. Its activity is regulated as follows. Insensitive to okadaic acid. Deubiquitination by WDR48-USP12 complex positively regulates PHLPP1 stability. In terms of biological role, protein phosphatase involved in regulation of Akt and PKC signaling. Mediates dephosphorylation in the C-terminal domain hydrophobic motif of members of the AGC Ser/Thr protein kinase family; specifically acts on 'Ser-473' of AKT2 and AKT3, 'Ser-660' of PRKCB and 'Ser-657' of PRKCA. Isoform 2 seems to have a major role in regulating Akt signaling in hippocampal neurons. Akt regulates the balance between cell survival and apoptosis through a cascade that primarily alters the function of transcription factors that regulate pro- and antiapoptotic genes. Dephosphorylation of 'Ser-473' of Akt triggers apoptosis and suppression of tumor growth. Dephosphorylation of PRKCA and PRKCB leads to their destabilization and degradation. Dephosphorylates STK4 on 'Thr-387' leading to STK4 activation and apoptosis. Dephosphorylates RPS6KB1 and is involved in regulation of cap-dependent translation. Inhibits cancer cell proliferation and may act as a tumor suppressor. Dephosphorylates RAF1 inhibiting its kinase activity. May act as a negative regulator of K-Ras signaling in membrane rafts. Involved in the hippocampus-dependent long-term memory formation. Involved in circadian control by regulating the consolidation of circadian periodicity after resetting. Involved in development and function of regulatory T-cells. The chain is PH domain leucine-rich repeat-containing protein phosphatase 1 (PHLPP1) from Homo sapiens (Human).